The chain runs to 578 residues: Hemolysin 4 (578 aa).

Residues 289–322 (KDGPKASWRRRPSSASSVTMPTTPRIIGSNARPE) are disordered. The region spanning 448 to 539 (RPVNLQLGGF…LSNLSAHQLL (92 aa)) is the Ricin B-type lectin domain.

It belongs to the HlyA hemolysin family.

Functionally, bacterial hemolysins are exotoxins that attack blood cell membranes and cause cell rupture by mechanisms not clearly defined. This is Hemolysin 4 (ash4) from Aeromonas salmonicida.